A 207-amino-acid chain; its full sequence is Ras-related protein Rab-7a (207 aa).

Thr-2 carries the post-translational modification N-acetylthreonine. GTP contacts are provided by Ser-17, Gly-18, Val-19, Gly-20, Lys-21, Thr-22, Ser-23, Ser-34, Asn-35, Tyr-37, and Thr-40. Thr-22 is a Mg(2+) binding site. The Switch 1 signature appears at Tyr-28–Ile-41. Thr-40 and Asp-63 together coordinate Mg(2+). Gly-66 is a binding site for GTP. Residues Gln-67 to Asp-82 carry the Switch 2 motif. Ser-72 bears the Phosphoserine mark. GTP-binding residues include Asn-125, Lys-126, Asp-128, Ala-156, and Lys-157. Glycyl lysine isopeptide (Lys-Gly) (interchain with G-Cter in ubiquitin) cross-links involve residues Lys-191 and Lys-194. S-geranylgeranyl cysteine attachment occurs at residues Cys-205 and Cys-207. Cys-207 carries the cysteine methyl ester modification.

This sequence belongs to the small GTPase superfamily. Rab family. Interacts with NTRK1/TRKA, RILP, PSMA7, RNF115 and FYCO1. Interacts with the PIK3C3/VPS34-PIK3R4 complex. The GTP-bound form interacts with OSBPL1A and RAC1. Interacts with CLN3. Interacts with CHM, the substrate-binding subunit of the Rab geranylgeranyltransferase complex. Interacts with C9orf72. Does not interact with HPS4 and the BLOC-3 complex (heterodimer of HPS1 and HPS4). Interacts with CLN5. Interacts with PLEKHM1 (via N- and C-terminus). Interacts with PRPH; the interaction is direct. Interacts with VPS13A. The GDP-bound form interacts with RIMOC1. Interacts with the MON1A-CCZ1B complex and this interaction is enhanced in the presence of RIMOC1. Interacts with VPS39 and VPS41. Forms a ternary complex with LAMP2 and RUFY4; the interaction with LAMP2 is mediated by RUFY4 (via RUN and coiled coil domains). The cofactor is Mg(2+). In terms of processing, deubiquitination at Lys-191 and Lys-194 by USP32. Phosphorylated at Ser-72 by LRRK1; phosphorylation is dependent on protein kinase C (PKC) activation of LRRK1. Post-translationally, prenylated. Prenylation is required for association with cellular membranes. As to expression, widely expressed. High expression in liver, heart and kidney. Found in sensory and motor neurons.

Its subcellular location is the cytoplasmic vesicle. It is found in the phagosome membrane. The protein localises to the late endosome membrane. It localises to the lysosome membrane. The protein resides in the melanosome membrane. Its subcellular location is the autophagosome membrane. It is found in the lipid droplet. The protein localises to the endosome membrane. It localises to the mitochondrion membrane. It carries out the reaction GTP + H2O = GDP + phosphate + H(+). Regulated by guanine nucleotide exchange factors (GEFs) which promote the exchange of bound GDP for free GTP. Regulated by GTPase activating proteins (GAPs) which increase the GTP hydrolysis activity. Inhibited by GDP dissociation inhibitors (GDIs). Its function is as follows. The small GTPases Rab are key regulators of intracellular membrane trafficking, from the formation of transport vesicles to their fusion with membranes. Rabs cycle between an inactive GDP-bound form and an active GTP-bound form that is able to recruit to membranes different sets of downstream effectors directly responsible for vesicle formation, movement, tethering and fusion. In its active state, RAB7A binds to a variety of effector proteins playing a key role in the regulation of endo-lysosomal trafficking. Governs early-to-late endosomal maturation, microtubule minus-end as well as plus-end directed endosomal migration and positioning, and endosome-lysosome transport through different protein-protein interaction cascades. Also plays a central role in growth-factor-mediated cell signaling, nutrient-transporter-mediated nutrient uptake, neurotrophin transport in the axons of neurons and lipid metabolism. Also involved in regulation of some specialized endosomal membrane trafficking, such as maturation of melanosomes, pathogen-induced phagosomes (or vacuoles) and autophagosomes. Plays a role in the maturation and acidification of phagosomes that engulf pathogens, such as S.aureus and Mycobacteria. Plays a role in the fusion of phagosomes with lysosomes. In concert with RAC1, plays a role in regulating the formation of RBs (ruffled borders) in osteoclasts. Controls the endosomal trafficking and neurite outgrowth signaling of NTRK1/TRKA. Regulates the endocytic trafficking of the EGF-EGFR complex by regulating its lysosomal degradation. Involved in the ADRB2-stimulated lipolysis through lipophagy, a cytosolic lipase-independent autophagic pathway. Required for the exosomal release of SDCBP, CD63 and syndecan. Required for vesicular trafficking and cell surface expression of ACE2. May play a role in PRPH neuronal intermediate filament assembly. This Mus musculus (Mouse) protein is Ras-related protein Rab-7a.